The sequence spans 345 residues: S-adenosylmethionine:tRNA ribosyltransferase-isomerase (345 aa).

This sequence belongs to the QueA family. In terms of assembly, monomer.

The protein resides in the cytoplasm. The enzyme catalyses 7-aminomethyl-7-carbaguanosine(34) in tRNA + S-adenosyl-L-methionine = epoxyqueuosine(34) in tRNA + adenine + L-methionine + 2 H(+). It participates in tRNA modification; tRNA-queuosine biosynthesis. Functionally, transfers and isomerizes the ribose moiety from AdoMet to the 7-aminomethyl group of 7-deazaguanine (preQ1-tRNA) to give epoxyqueuosine (oQ-tRNA). This Anaeromyxobacter dehalogenans (strain 2CP-1 / ATCC BAA-258) protein is S-adenosylmethionine:tRNA ribosyltransferase-isomerase.